The following is a 414-amino-acid chain: MSAAALEEIGIAPLQENTSLRPPPLPATCVDVSSDDYIKLTTLERQLAHLQVMEDYIKLETRNLEKELLHAQEEVKRIQSVPLVIGQFLEAVDQNHAIVGSTTGSNYYVRVLSILDRELLKPGCSVALHKYSNALVDVLPPEADSSIQMLRPDEKPDISYGDIGGLDMQKQEVREAVELPLTHGELYQQIGIDPPRGVLMYGPPGCGKTMLAKAVAANTAASFIRVVGSEFVQKYLGEGPRMVRDVFRLAKENSPSIIFIDEIDAIATKRFDAQTGADREVQRILLELLNQMDGFDQSTNVKVIMATNRQDTLDPALLRPGRLDRKIEFPLPDRRQKRLVFSTVCSRMNLSDDVDLEDWVARPDKISGADINSICQEAGMQAVRENRYVVLTKDLEKAYKNVVKKDTNDFEFYK.

Residue 202–209 (GPPGCGKT) coordinates ATP.

The protein belongs to the AAA ATPase family.

It localises to the cytoplasm. The protein localises to the nucleus. The 26S proteasome is involved in the ATP-dependent degradation of ubiquitinated proteins. The regulatory (or ATPase) complex confers ATP dependency and substrate specificity to the 26S complex. In Caenorhabditis elegans, this protein is Probable 26S proteasome regulatory subunit 6B (rpt-3).